Here is a 149-residue protein sequence, read N- to C-terminus: Early lymphoid activation gene protein (149 aa).

As to expression, expressed in heart, kidney, lung, and skeletal muscle, with lower levels in pancreas and liver.

Functionally, may function as an early signal that helps mediate the activation of T-cells. This Homo sapiens (Human) protein is Early lymphoid activation gene protein (DIAPH2-AS1).